The following is a 940-amino-acid chain: Testis-expressed protein 11 (940 aa).

Belongs to the SPO22 family. In terms of assembly, interacts with SYCP2. Interacts with PBXIP1; may prevent interaction between PBXIP1 and ESR2. Interacts with SHOC1. Interacts with REDIC1. In terms of tissue distribution, testis-specific. Not expressed in adult ovaries.

It is found in the chromosome. In terms of biological role, regulator of crossing-over during meiosis. Involved in initiation and/or maintenance of chromosome synapsis and formation of crossovers. The polypeptide is Testis-expressed protein 11 (TEX11) (Homo sapiens (Human)).